A 130-amino-acid polypeptide reads, in one-letter code: Small ribosomal subunit protein uS9 (130 aa).

This sequence belongs to the universal ribosomal protein uS9 family.

The polypeptide is Small ribosomal subunit protein uS9 (Vibrio vulnificus (strain CMCP6)).